Here is a 202-residue protein sequence, read N- to C-terminus: NADH-quinone oxidoreductase subunit C (202 aa).

The protein belongs to the complex I 30 kDa subunit family. NDH-1 is composed of 14 different subunits. Subunits NuoB, C, D, E, F, and G constitute the peripheral sector of the complex.

Its subcellular location is the cell inner membrane. The enzyme catalyses a quinone + NADH + 5 H(+)(in) = a quinol + NAD(+) + 4 H(+)(out). Functionally, NDH-1 shuttles electrons from NADH, via FMN and iron-sulfur (Fe-S) centers, to quinones in the respiratory chain. The immediate electron acceptor for the enzyme in this species is believed to be ubiquinone. Couples the redox reaction to proton translocation (for every two electrons transferred, four hydrogen ions are translocated across the cytoplasmic membrane), and thus conserves the redox energy in a proton gradient. In Bartonella henselae (strain ATCC 49882 / DSM 28221 / CCUG 30454 / Houston 1) (Rochalimaea henselae), this protein is NADH-quinone oxidoreductase subunit C.